The chain runs to 302 residues: tRNA pseudouridine synthase B (302 aa).

Asp47 serves as the catalytic Nucleophile.

It belongs to the pseudouridine synthase TruB family. Type 1 subfamily.

It catalyses the reaction uridine(55) in tRNA = pseudouridine(55) in tRNA. Functionally, responsible for synthesis of pseudouridine from uracil-55 in the psi GC loop of transfer RNAs. This Methylobacillus flagellatus (strain ATCC 51484 / DSM 6875 / VKM B-1610 / KT) protein is tRNA pseudouridine synthase B.